Here is an 82-residue protein sequence, read N- to C-terminus: Putative membrane protein insertion efficiency factor (82 aa).

It belongs to the UPF0161 family.

The protein resides in the cell inner membrane. Functionally, could be involved in insertion of integral membrane proteins into the membrane. The polypeptide is Putative membrane protein insertion efficiency factor (Francisella tularensis subsp. novicida (strain U112)).